Consider the following 172-residue polypeptide: Putative B3 domain-containing protein At1g05615 (172 aa).

The segment at residues 69 to 169 is a DNA-binding region (TF-B3); that stretch reads VDEGKIIDFE…NLAMVPLTPT (101 aa).

It is found in the nucleus. The sequence is that of Putative B3 domain-containing protein At1g05615 from Arabidopsis thaliana (Mouse-ear cress).